The sequence spans 512 residues: Cobyric acid synthase (512 aa).

The region spanning 251 to 451 (ALDITVIRLP…IHGLFDSANF (201 aa)) is the GATase cobBQ-type domain. Cys-332 (nucleophile) is an active-site residue. His-443 is an active-site residue.

This sequence belongs to the CobB/CobQ family. CobQ subfamily.

It functions in the pathway cofactor biosynthesis; adenosylcobalamin biosynthesis. Catalyzes amidations at positions B, D, E, and G on adenosylcobyrinic A,C-diamide. NH(2) groups are provided by glutamine, and one molecule of ATP is hydrogenolyzed for each amidation. The sequence is that of Cobyric acid synthase from Photorhabdus laumondii subsp. laumondii (strain DSM 15139 / CIP 105565 / TT01) (Photorhabdus luminescens subsp. laumondii).